The sequence spans 455 residues: GTPase Der (455 aa).

EngA-type G domains follow at residues 4–169 (PVVA…PPKD) and 178–353 (IQMA…EQHR). GTP contacts are provided by residues 10-17 (GRPNVGKS), 57-61 (DTGGL), 120-123 (NKCE), 184-191 (GRPNVGKS), 231-235 (DTAGI), and 296-299 (NKWD). The region spanning 354–439 (RRVSTSVVNE…PLRLFWRGKQ (86 aa)) is the KH-like domain.

It belongs to the TRAFAC class TrmE-Era-EngA-EngB-Septin-like GTPase superfamily. EngA (Der) GTPase family. In terms of assembly, associates with the 50S ribosomal subunit.

Its function is as follows. GTPase that plays an essential role in the late steps of ribosome biogenesis. The polypeptide is GTPase Der (Synechococcus sp. (strain CC9605)).